Here is a 1497-residue protein sequence, read N- to C-terminus: Collagen alpha-2(V) chain (1497 aa).

The N-terminal stretch at 1 to 26 is a signal peptide; sequence MMANWVGARPLLILSVLLGYCVSIKA. The 59-residue stretch at 38-96 folds into the VWFC domain; the sequence is IACTQHGQMYLNRDIWKPSPCQICVCDNGAILCDKIECPEVLNCANPITPTGECCPVCP. Positions 103 to 1265 are disordered; that stretch reads TSFGRGRKGQ…PDDTNKTDPG (1163 aa). Residues 141 to 143 carry the Cell attachment site motif; it reads RGD. A compositionally biased stretch (low complexity) spans 155 to 164; it reads PQGIDGEPGV. Pro residues predominate over residues 168–180; sequence PGAPGPPGHPSHP. Low complexity predominate over residues 210–225; that stretch reads PGSVGPVGPRGPQGLQ. The segment covering 234-246 has biased composition (pro residues); sequence AGPPGEPGEPGPM. 3 positions are modified to 4-hydroxyproline: proline 288, proline 291, and proline 294. Composition is skewed to low complexity over residues 320–338 and 425–441; these read EAGP…PRGM and TPGA…SGPP. The short motif at 504 to 506 is the Cell attachment site element; the sequence is RGD. Residues 550–559 are compositionally biased toward gly residues; that stretch reads GPKGGQGDPG. The segment covering 602–611 has biased composition (low complexity); it reads SIGIRGQPGS. 4-hydroxyproline is present on residues proline 609 and proline 615. The segment covering 708–719 has biased composition (basic and acidic residues); that stretch reads RGERGNPGERGE. A compositionally biased stretch (gly residues) spans 730 to 739; it reads GMAGGHGPDG. Positions 744 to 756 are enriched in low complexity; sequence PGPTGTIGDTGPP. The segment covering 774–785 has biased composition (basic and acidic residues); that stretch reads KGDRGGIGEKGA. 2 stretches are compositionally biased toward low complexity: residues 824–839 and 878–891; these read PPGS…ENGP and LAGS…HGVP. Over residues 892-901 the composition is skewed to gly residues; that stretch reads GLKGGRGTQG. A compositionally biased stretch (pro residues) spans 917-927; sequence PPGPAGAPGPA. 3 short sequence motifs (cell attachment site) span residues 942 to 944, 1065 to 1067, and 1068 to 1070; these read RGD. A compositionally biased stretch (basic and acidic residues) spans 1061 to 1070; the sequence is AVGERGDRGD. Residues 1091–1112 show a composition bias toward low complexity; that stretch reads APGDAGQRGEPGSRGPVGPPGR. 2 consecutive short sequence motifs (cell attachment site) follow at residues 1125-1127 and 1134-1136; these read RGD. The segment covering 1125–1139 has biased composition (basic and acidic residues); the sequence is RGDKGDNGDRGDRGQ. Composition is skewed to pro residues over residues 1169–1179 and 1209–1224; these read PFGPRGPPGPV and EGPP…PGPP. The propeptide at 1228–1497 is C-terminal propeptide; sequence TAALGDIMGH…GLDIGPVCFM (270 aa). The N-linked (GlcNAc...) asparagine glycan is linked to asparagine 1260. Residues 1264–1497 enclose the Fibrillar collagen NC1 domain; the sequence is PGIHVTLKSL…GLDIGPVCFM (234 aa). Cystine bridges form between cysteine 1294–cysteine 1326, cysteine 1334–cysteine 1495, and cysteine 1403–cysteine 1448. Ca(2+) contacts are provided by aspartate 1312, asparagine 1314, glutamine 1315, and aspartate 1320. Asparagine 1398 carries an N-linked (GlcNAc...) asparagine glycan.

The protein belongs to the fibrillar collagen family. As to quaternary structure, trimers of two alpha 1(V) and one alpha 2(V) chains expressed in most tissues and trimers of one alpha 1(V), one alpha 2(V), and one alpha 3(V) chains with a more limited distribution of expression. Post-translationally, prolines at the third position of the tripeptide repeating unit (G-X-P) are hydroxylated in some or all of the chains. Probably 3-hydroxylated on prolines by LEPREL1. In terms of processing, hydroxylation on proline residues within the sequence motif, GXPG, is most likely to be 4-hydroxy as this fits the requirement for 4-hydroxylation in vertebrates.

It is found in the secreted. Its subcellular location is the extracellular space. The protein resides in the extracellular matrix. In terms of biological role, type V collagen is a member of group I collagen (fibrillar forming collagen). It is a minor connective tissue component of nearly ubiquitous distribution. Type V collagen binds to DNA, heparan sulfate, thrombospondin, heparin, and insulin. Type V collagen is a key determinant in the assembly of tissue-specific matrices. This Mus musculus (Mouse) protein is Collagen alpha-2(V) chain.